The primary structure comprises 173 residues: Helix-loop-helix protein lin-22 (173 aa).

Residues 21-34 (KKIKNKPLMEKKRR) form a basic motif region. The 58-residue stretch at 21 to 78 (KKIKNKPLMEKKRRARINKSLSQLKQILIQDEHKNSIQHSKWEKADILEMAVEYLQQL) folds into the bHLH domain. The segment at 35–78 (ARINKSLSQLKQILIQDEHKNSIQHSKWEKADILEMAVEYLQQL) is helix-loop-helix motif. Residues 83 to 95 (PCSLSPSTSSIST) are compositionally biased toward low complexity. Positions 83–102 (PCSLSPSTSSISTPPTPKEE) are disordered.

As to expression, expressed mostly in the seam (stem) cells and hypodermis (hyp7), but also to a lesser extent in the intestine.

It localises to the nucleus. Probable transcription factor. During development, required for cell fate specification, probably by promoting or repressing expression of genes involved in specific cell fate. Involved in specifying lineages derived from the epidermal stem cells of the lateral ectoderm, known as seam cells. Modulates symmetric divisions of seam cells, perhaps in concert with the Wnt signaling pathway. May repress expression of homeobox genes mab-5, egl-5 and lin-39. The sequence is that of Helix-loop-helix protein lin-22 from Caenorhabditis elegans.